The chain runs to 664 residues: Cyclic nucleotide-gated channel alpha-2 (664 aa).

Positions 1-20 (MTEKSNGVKSSPANNHNNHV) are enriched in polar residues. The tract at residues 1 to 49 (MTEKSNGVKSSPANNHNNHVPATIKANGKDESRTRSRPQSAADDDTSSE) is disordered. The Cytoplasmic segment spans residues 1–144 (MTEKSNGVKS…PAGDWYYRWL (144 aa)). A helical transmembrane segment spans residues 145–166 (FVIAMPVLYNWCLLVARACFSD). Residues 167–176 (LQRGYFLVWL) lie on the Extracellular side of the membrane. Residues 177–197 (VLDYFSDVVYIADLFIRLRTG) form a helical membrane-spanning segment. Over 198–222 (FLEQGLLVKDPKKLRDNYIHTLQFK) the chain is Cytoplasmic. The helical transmembrane segment at 223-241 (LDVASIIPTDLIYFAVGIH) threads the bilayer. The Extracellular portion of the chain corresponds to 242-246 (NPELR). The chain crosses the membrane as a helical span at residues 247–265 (FNRLLHFARMFEFFDRTET). Over 266-272 (RTSYPNI) the chain is Cytoplasmic. Positions 270-378 (PNIFRISNLV…GNVGSMISNM (109 aa)) are ion conduction pathway. A helical transmembrane segment spans residues 273–296 (FRISNLVLYILVIIHWNACIYYAI). Over 297 to 319 (SKSIGFGVDTWVYPNITDPEYGY) the chain is Extracellular. 2 helical membrane passes run 320–354 (LARE…LFVI) and 355–379 (FDFL…SNMN). Positions 337–340 (TIGE) are selectivity filter. Residues 380–456 (ATRAEFQAKI…STLKKVRIFQ (77 aa)) are C-linker. At 380 to 664 (ATRAEFQAKI…SPEPAAAEQP (285 aa)) the chain is on the cytoplasmic side. Positions 460 to 580 (AGLLVELVLK…EERGREILMK (121 aa)) are cyclic nucleotide-binding domain. Gly520, Ser523, Arg536, and Thr537 together coordinate 3',5'-cyclic GMP. 3',5'-cyclic AMP is bound by residues Arg536 and Thr537. Positions 597–651 (VQEKLKQLETNMETLYTRFGRLLAEYTGAQQKLKQRITVLEVKMKQNTEDDYLSD) form a coiled coil. Residues 644–664 (TEDDYLSDGMNSPEPAAAEQP) form a disordered region.

Belongs to the cyclic nucleotide-gated cation channel (TC 1.A.1.5) family. CNGA2 subfamily. As to quaternary structure, the olfactory cyclic nucleotide-gated channel is an heterotetramer composed of CNGA2, CNGA4 and CNGB1b subunits with 2:1:1 stoichiometry.

Its subcellular location is the cell projection. The protein resides in the cilium membrane. It catalyses the reaction Ca(2+)(in) = Ca(2+)(out). It carries out the reaction Na(+)(in) = Na(+)(out). The enzyme catalyses K(+)(in) = K(+)(out). The catalysed reaction is NH4(+)(in) = NH4(+)(out). It catalyses the reaction Rb(+)(in) = Rb(+)(out). It carries out the reaction Li(+)(in) = Li(+)(out). The enzyme catalyses Cs(+)(in) = Cs(+)(out). Functionally, pore-forming subunit of the olfactory cyclic nucleotide-gated channel. Operates in the cilia of olfactory sensory neurons where chemical stimulation of the odorant is converted to an electrical signal. Mediates odorant-induced cAMP-dependent Ca(2+) influx triggering neuron depolarization. The rise of intracellular Ca(2+) levels potentiates the olfactory response by activating Ca(2+)-dependent Cl(-) channels, but it also serves as a negative feedback signal to desensitize the channel for rapid adaptation to odorants. Conducts cAMP- and cGMP-gated ion currents, with permeability for monovalent and divalent cations. The polypeptide is Cyclic nucleotide-gated channel alpha-2 (Oryctolagus cuniculus (Rabbit)).